Consider the following 192-residue polypeptide: Putative acetyltransferase YjbC (192 aa).

The region spanning 1–139 is the N-acetyltransferase domain; it reads MNWYEKLSEY…MEILYWSPKT (139 aa).

It is found in the cytoplasm. This is Putative acetyltransferase YjbC (yjbC) from Bacillus subtilis (strain 168).